The sequence spans 302 residues: Glycine--tRNA ligase alpha subunit (302 aa).

Belongs to the class-II aminoacyl-tRNA synthetase family. Tetramer of two alpha and two beta subunits.

It is found in the cytoplasm. It carries out the reaction tRNA(Gly) + glycine + ATP = glycyl-tRNA(Gly) + AMP + diphosphate. The sequence is that of Glycine--tRNA ligase alpha subunit from Enterococcus faecalis (strain ATCC 700802 / V583).